The following is a 447-amino-acid chain: Na(+)-translocating NADH-quinone reductase subunit A (447 aa).

Belongs to the NqrA family. Composed of six subunits; NqrA, NqrB, NqrC, NqrD, NqrE and NqrF.

The enzyme catalyses a ubiquinone + n Na(+)(in) + NADH + H(+) = a ubiquinol + n Na(+)(out) + NAD(+). NQR complex catalyzes the reduction of ubiquinone-1 to ubiquinol by two successive reactions, coupled with the transport of Na(+) ions from the cytoplasm to the periplasm. NqrA to NqrE are probably involved in the second step, the conversion of ubisemiquinone to ubiquinol. In Yersinia pseudotuberculosis serotype O:1b (strain IP 31758), this protein is Na(+)-translocating NADH-quinone reductase subunit A.